A 300-amino-acid chain; its full sequence is Urease accessory protein UreD (300 aa).

This sequence belongs to the UreD family. As to quaternary structure, ureD, UreF and UreG form a complex that acts as a GTP-hydrolysis-dependent molecular chaperone, activating the urease apoprotein by helping to assemble the nickel containing metallocenter of UreC. The UreE protein probably delivers the nickel.

It is found in the cytoplasm. Functionally, required for maturation of urease via the functional incorporation of the urease nickel metallocenter. The protein is Urease accessory protein UreD of Prochlorococcus marinus (strain AS9601).